Reading from the N-terminus, the 302-residue chain is MKIAILATNPHLYSHKRLKAEAEAAGHEVKIINPLYCYMNVAASNPKVHYRGGAPLPHFDAVIPRIGASITYYGTAVLRHMETMGMYTLNESIAISRSRDKFRSLQLLARKGIPMPLTSFAQSPDDTEDLIHMVGGAPLVIKLLEGTQGKGVILADSHQSAVSIINAFKEMHANILVQEFIEESRGTDIRCFVIGEKVVAAVKRQAKDGEFRANVHQGGKAVKVKLSPQERAIAVSAAKTMGLRVAGVDLIRSNHGPLVLEINSSPGLEGIEKATNINLAGKIIEYIEKKAKPISSNHRFHG.

Residues 105-288 enclose the ATP-grasp domain; sequence LQLLARKGIP…LAGKIIEYIE (184 aa). ATP-binding positions include K142, 179–180, D188, and 212–214; these read EF and RAN. Positions 249, 261, and 263 each coordinate Mg(2+). The Mn(2+) site is built by D249, E261, and N263.

It belongs to the RimK family. Requires Mg(2+) as cofactor. The cofactor is Mn(2+).

This chain is Probable alpha-L-glutamate ligase, found in Legionella pneumophila (strain Paris).